Consider the following 82-residue polypeptide: Escargot/snail protein homolog (82 aa).

C2H2-type zinc fingers lie at residues 1–5, 18–40, 44–66, and 72–82; these read HLQFH, FSCKLCDKVYTSLGALKMHIRTH, CKCDICHKAFSRPWLLQGHIRTH, and FSCQHCHRAFA.

The protein belongs to the snail C2H2-type zinc-finger protein family.

Its subcellular location is the nucleus. This chain is Escargot/snail protein homolog, found in Bradysia coprophila (Dark-winged fungus gnat).